Reading from the N-terminus, the 355-residue chain is Heme A synthase (355 aa).

Transmembrane regions (helical) follow at residues 21-41, 85-102, 136-156, 173-193, 208-228, 264-284, 299-319, and 322-342; these read LARWLWAVALLVIIVVGVGGI, INLGMTLAGFKAIFFWEW, LFALTALVGLQGAIGWWMVAS, LLTALFLLAGLVWTARDLGAL, AIGVIAILFVQLLLGAWVAGL, FLIHFLHRWWSWAAAGALLLL, ALVIVVAAQMLLGIWTIVSGV, and WVAVMHQVVGAILVAVTAAAL. Histidine 270 contributes to the heme binding site. Histidine 327 is a heme binding site.

Belongs to the COX15/CtaA family. Type 2 subfamily. As to quaternary structure, interacts with CtaB. Heme b is required as a cofactor.

The protein localises to the cell membrane. The enzyme catalyses Fe(II)-heme o + 2 A + H2O = Fe(II)-heme a + 2 AH2. The protein operates within porphyrin-containing compound metabolism; heme A biosynthesis; heme A from heme O: step 1/1. Its function is as follows. Catalyzes the conversion of heme O to heme A by two successive hydroxylations of the methyl group at C8. The first hydroxylation forms heme I, the second hydroxylation results in an unstable dihydroxymethyl group, which spontaneously dehydrates, resulting in the formyl group of heme A. In Sphingopyxis alaskensis (strain DSM 13593 / LMG 18877 / RB2256) (Sphingomonas alaskensis), this protein is Heme A synthase.